Reading from the N-terminus, the 150-residue chain is Ubiquitin-conjugating enzyme E2 3 (150 aa).

Positions 4–150 (PAKKRLMWDF…VIEIVEQSYV (147 aa)) constitute a UBC core domain. Cys-88 functions as the Glycyl thioester intermediate in the catalytic mechanism.

This sequence belongs to the ubiquitin-conjugating enzyme family. In terms of tissue distribution, expressed in all tissues examined. Lower levels found in leaves.

It carries out the reaction S-ubiquitinyl-[E1 ubiquitin-activating enzyme]-L-cysteine + [E2 ubiquitin-conjugating enzyme]-L-cysteine = [E1 ubiquitin-activating enzyme]-L-cysteine + S-ubiquitinyl-[E2 ubiquitin-conjugating enzyme]-L-cysteine.. It functions in the pathway protein modification; protein ubiquitination. Accepts the ubiquitin from the E1 complex and catalyzes its covalent attachment to other proteins. The protein is Ubiquitin-conjugating enzyme E2 3 (UBC3) of Arabidopsis thaliana (Mouse-ear cress).